A 185-amino-acid chain; its full sequence is Intraflagellar transport protein 22 homolog (185 aa).

Residues 10–17 (GPCESGKT), 63–67 (DCGGD), and 123–126 (HKPG) each bind GTP.

It belongs to the small GTPase superfamily. Rab family. As to quaternary structure, component of the IFT complex B, at least composed of IFT20, IFT22, IFT25, IFT27, IFT46, IFT52, TRAF3IP1/IFT54, IFT57, IFT74, IFT80, IFT81, and IFT88. Interacts with IFT88. Interacts with CFAP61.

It localises to the cell projection. The protein localises to the cilium. Its function is as follows. Small GTPase-like component of the intraflagellar transport (IFT) complex B. This is Intraflagellar transport protein 22 homolog (IFT22) from Bos taurus (Bovine).